A 405-amino-acid chain; its full sequence is MRFIDEAVVTVKAGDGGNGIASFRREKYVPRGGPDGGDGGKGGDVYVIAEDNTNTLVDYRYTRRHDAMRAENGHSRNCSGKGSDDLFLPVPIGTTVVDTETDEVLGDLIEIGQTLLIAKGGDGGLGNTHFKSSTNQAPRKATSGFEGELKVLKFELKVVADVGLIGLPNAGKSTFIRQVSAARPKVADYPFTTLVPNLGVVDIGRHRSFVMADIPGLIEGASEGAGLGIRFLKHVARTRRLLHLVDIKPIDGSDPVENARVILNELERFSPELANLPQILVLNKIDQVPEEELNELCTHIVAELGWTGIVFRTATLTGEGVDAIKYHLMNEIEREREREIEDPIFADAQKARFERLEAEVRLNTEAQREAYRAARKAAREGTDLSDDDFDDSDDDDDGVEVVYAP.

In terms of domain architecture, Obg spans Met-1–Val-159. The region spanning Ala-160–Glu-333 is the OBG-type G domain. Residues Gly-166 to Ser-173, Phe-191 to Val-195, Asp-213 to Gly-216, Asn-283 to Asp-286, and Ala-314 to Leu-316 each bind GTP. Residues Ser-173 and Thr-193 each contribute to the Mg(2+) site. Residues Tyr-371–Thr-382 are compositionally biased toward basic and acidic residues. Residues Tyr-371–Pro-405 are disordered. Positions Asp-383–Val-399 are enriched in acidic residues.

It belongs to the TRAFAC class OBG-HflX-like GTPase superfamily. OBG GTPase family. As to quaternary structure, monomer. Mg(2+) serves as cofactor.

Its subcellular location is the cytoplasm. An essential GTPase which binds GTP, GDP and possibly (p)ppGpp with moderate affinity, with high nucleotide exchange rates and a fairly low GTP hydrolysis rate. Plays a role in control of the cell cycle, stress response, ribosome biogenesis and in those bacteria that undergo differentiation, in morphogenesis control. The polypeptide is GTPase Obg (Psychrobacter cryohalolentis (strain ATCC BAA-1226 / DSM 17306 / VKM B-2378 / K5)).